A 337-amino-acid chain; its full sequence is Eukaryotic translation initiation factor 3 subunit H (337 aa).

The region spanning 21 to 153 is the MPN domain; it reads VQCDGLAVMK…LKAYRLTPQA (133 aa).

It belongs to the eIF-3 subunit H family. Component of the eukaryotic translation initiation factor 3 (eIF-3) complex. The eIF-3 complex interacts with pix. Interacts with mxt.

It is found in the cytoplasm. In terms of biological role, component of the eukaryotic translation initiation factor 3 (eIF-3) complex, which is involved in protein synthesis of a specialized repertoire of mRNAs and, together with other initiation factors, stimulates binding of mRNA and methionyl-tRNAi to the 40S ribosome. The eIF-3 complex specifically targets and initiates translation of a subset of mRNAs involved in cell proliferation. In Drosophila grimshawi (Hawaiian fruit fly), this protein is Eukaryotic translation initiation factor 3 subunit H.